The chain runs to 598 residues: N-acetylmuramoyl-L-alanine amidase (598 aa).

An N-terminal signal peptide occupies residues 1 to 31; sequence MSPGNWKTTMVVRGILLILYGLLLQPEPGTA. Disordered regions lie at residues 172–194 and 212–233; these read SSAHKDTSADVNSADVGTLSPNV and STGVQVTSPDVQVSSPDTKAKS. Residue serine 261 is modified to Phosphoserine. Asparagine 353 carries N-linked (GlcNAc...) asparagine glycosylation. The N-acetylmuramoyl-L-alanine amidase domain maps to 428-554; sequence FLYIHHTYVP…RQLVRTDCPG (127 aa). Position 432 (histidine 432) interacts with Zn(2+). A disulfide bridge connects residues cysteine 441 and cysteine 447. N-linked (GlcNAc...) asparagine glycosylation occurs at asparagine 507. Zn(2+) contacts are provided by histidine 544 and cysteine 552.

This sequence belongs to the N-acetylmuramoyl-L-alanine amidase 2 family. Requires Zn(2+) as cofactor.

It is found in the secreted. The protein resides in the membrane. It carries out the reaction Hydrolyzes the link between N-acetylmuramoyl residues and L-amino acid residues in certain cell-wall glycopeptides.. Functionally, may play a scavenger role by digesting biologically active peptidoglycan (PGN) into biologically inactive fragments. Has no direct bacteriolytic activity. This is N-acetylmuramoyl-L-alanine amidase (PGLYRP2) from Sus scrofa (Pig).